The primary structure comprises 931 residues: Netrin receptor UNC5C (931 aa).

Residues M1–A40 form the signal peptide. At Q41–Y380 the chain is on the extracellular side. The region spanning P62–Y159 is the Ig-like domain. Cystine bridges form between C83/C144, C95/C142, C188/C239, C272/C309, C276/C313, C287/C299, C328/C362, C332/C367, and C340/C352. In terms of domain architecture, Ig-like C2-type spans R161–I256. Residue N236 is glycosylated (N-linked (GlcNAc...) asparagine). TSP type-1 domains follow at residues N260 to P314 and D316 to M368. Residue N361 is glycosylated (N-linked (GlcNAc...) asparagine). Residues V381–V401 traverse the membrane as a helical segment. At Y402–Y931 the chain is on the cytoplasmic side. The tract at residues Y402 to Y931 is required for netrin-mediated axon repulsion of neuronal growth cones. At S502 the chain carries Phosphoserine. The 144-residue stretch at C530 to S673 folds into the ZU5 domain. Position 568 is a phosphotyrosine (Y568). Positions S694–K712 are interaction with DCC. Residues Q850 to G929 enclose the Death domain.

Belongs to the unc-5 family. Interacts with DCC (via cytoplasmic domain). Interacts (tyrosine phosphorylated form) with PTPN11. Interacts (via extracellular domain) with FLRT3 (via extracellular domain). Interacts (via Ig-like C2-type domain) with DSCAM (via extracellular domain). Interacts (via death domain) with DAPK1. Interacts (via cytoplasmic domain) with TUBB3; this interaction is decreased by NTN1/Netrin-1. Proteolytically cleaved by caspases during apoptosis. The cleavage does not take place when the receptor is associated with netrin ligand. Its cleavage by caspases is required to induce apoptosis. Post-translationally, phosphorylated on different cytoplasmic tyrosine residues. Phosphorylation of Tyr-568 leads to an interaction with PTPN11 phosphatase, suggesting that its activity is regulated by phosphorylation/dephosphorylation. Tyrosine phosphorylation is netrin-dependent. Detected in brain (at protein level). Mainly expressed in brain. Also expressed in kidney. Not expressed in developing or adult lung.

Its subcellular location is the cell membrane. The protein resides in the cell surface. It localises to the synapse. It is found in the synaptosome. The protein localises to the cell projection. Its subcellular location is the axon. The protein resides in the dendrite. It localises to the growth cone. It is found in the lamellipodium. The protein localises to the filopodium. Its function is as follows. Receptor for netrin required for axon guidance. Mediates axon repulsion of neuronal growth cones in the developing nervous system upon ligand binding. NTN1/Netrin-1 binding might cause dissociation of UNC5C from polymerized TUBB3 in microtubules and thereby lead to increased microtubule dynamics and axon repulsion. Axon repulsion in growth cones may also be caused by its association with DCC that may trigger signaling for repulsion. Might also collaborate with DSCAM in NTN1-mediated axon repulsion independently of DCC. Also involved in corticospinal tract axon guidance independently of DCC. Involved in dorsal root ganglion axon projection towards the spinal cord. It also acts as a dependence receptor required for apoptosis induction when not associated with netrin ligand. The chain is Netrin receptor UNC5C (Unc5c) from Rattus norvegicus (Rat).